A 501-amino-acid chain; its full sequence is Sodium-coupled neutral amino acid symporter 2 (501 aa).

Residues 1 to 26 (MSSAEMGKFDISPDEDSSSYSSNSND) are disordered. Topologically, residues 1–77 (MSSAEMGKFD…HPGTTSFGMS (77 aa)) are cytoplasmic. A regulates protein turnover upon amino acid deprivation region spans residues 1–97 (MSSAEMGKFD…SGILGLSYAM (97 aa)). The chain crosses the membrane as a helical span at residues 78-97 (VFNLSNAIVGSGILGLSYAM). Asn83 is a Na(+) binding site. Over 98-103 (ANTGIA) the chain is Extracellular. The helical transmembrane segment at 104–124 (LFVILLLVVSILSLYSVHLLL) threads the bilayer. The Cytoplasmic segment spans residues 125–159 (KTANEGGSLLYEQLGMKAFGMPGKLAASGSITMQN). Residues 160–178 (IGAMSSYLFIVKYELPLVI) form a helical membrane-spanning segment. Over 179–189 (KTFMNIEENAG) the chain is Extracellular. A helical transmembrane segment spans residues 190-210 (HWYLNGDYLVLLVSVILILPL). Topologically, residues 211-218 (SLLKNLGY) are cytoplasmic. Residues 219 to 239 (LGYTSGFSLLCMVFFLIVVIW) form a helical membrane-spanning segment. Over 240–287 (KMFQIPCPMESDIINATLINATLAPFADENITISDACKPEYFIFNSQT) the chain is Extracellular. A disulfide bridge links Cys246 with Cys276. Asn254 and Asn259 each carry an N-linked (GlcNAc...) asparagine glycan. A helical membrane pass occupies residues 288–308 (VYAVPILTFSFVCHPAILPIY). The Cytoplasmic portion of the chain corresponds to 309-324 (EELKSRSRKRMMNVSY). The helical transmembrane segment at 325 to 345 (VSFFAMFLMYLLAALFGYLTF) threads the bilayer. The Extracellular portion of the chain corresponds to 346–366 (YGRVESELLHTYSAFLGADIL). The helical transmembrane segment at 367–387 (LLIVRLAVLMAVTLTVPVVIF) threads the bilayer. Position 381 (Thr381) interacts with Na(+). Residues 388-408 (PIRSSVTQLLWAGKEFSWWRH) are Cytoplasmic-facing. Residues 409-429 (CSITVVLLAFTNVLVIFVPTI) form a helical membrane-spanning segment. Over 430-431 (RD) the chain is Extracellular. A helical membrane pass occupies residues 432 to 452 (IFGFIGASAAAMLIFILPSAF). Topologically, residues 453–467 (YIKLVKKEPMKSVQK) are cytoplasmic. A helical membrane pass occupies residues 468 to 490 (IGAALFFLSGILVMTGCMTLIIL). The Extracellular portion of the chain corresponds to 491–501 (DWIHTDASDGH).

The protein belongs to the amino acid/polyamine transporter 2 family.

Its subcellular location is the cell membrane. It catalyses the reaction L-alanine(in) + Na(+)(in) = L-alanine(out) + Na(+)(out). The enzyme catalyses glycine(in) + Na(+)(in) = glycine(out) + Na(+)(out). It carries out the reaction L-serine(in) + Na(+)(in) = L-serine(out) + Na(+)(out). The catalysed reaction is L-proline(in) + Na(+)(in) = L-proline(out) + Na(+)(out). It catalyses the reaction L-methionine(in) + Na(+)(in) = L-methionine(out) + Na(+)(out). The enzyme catalyses L-histidine(in) + Na(+)(in) = L-histidine(out) + Na(+)(out). It carries out the reaction L-asparagine(in) + Na(+)(in) = L-asparagine(out) + Na(+)(out). The catalysed reaction is L-glutamine(in) + Na(+)(in) = L-glutamine(out) + Na(+)(out). It catalyses the reaction L-threonine(in) + Na(+)(in) = L-threonine(out) + Na(+)(out). The enzyme catalyses L-leucine(in) + Na(+)(in) = L-leucine(out) + Na(+)(out). It carries out the reaction L-phenylalanine(in) + Na(+)(in) = L-phenylalanine(out) + Na(+)(out). Inhibited by N-methyl-D-glucamine. Inhibited by choline. Allosteric regulation of sodium ions binding by pH. Functionally, symporter that cotransports neutral amino acids and sodium ions from the extracellular to the intracellular side of the cell membrane. The transport is pH-sensitive, Li(+)-intolerant, electrogenic, driven by the Na(+) electrochemical gradient and cotransports of neutral amino acids and sodium ions with a stoichiometry of 1:1. The protein is Sodium-coupled neutral amino acid symporter 2 of Gallus gallus (Chicken).